The following is a 458-amino-acid chain: Bifunctional protein GlmU (458 aa).

Residues 1–228 (MHPKLDILIL…DWEVLGVNSK (228 aa)) form a pyrophosphorylase region. UDP-N-acetyl-alpha-D-glucosamine contacts are provided by residues 10-13 (LAAG), Lys24, Gln75, 80-81 (GT), 102-104 (YGD), Gly139, Glu153, Asn168, and Asn226. Asp104 is a Mg(2+) binding site. Position 226 (Asn226) interacts with Mg(2+). Residues 229–249 (AQLAELERIHQNEVAQRLLAD) form a linker region. The segment at 250–458 (GVTLMDPARL…KRPIKPKKEG (209 aa)) is N-acetyltransferase. 2 residues coordinate UDP-N-acetyl-alpha-D-glucosamine: Arg332 and Lys350. His362 functions as the Proton acceptor in the catalytic mechanism. The UDP-N-acetyl-alpha-D-glucosamine site is built by Tyr365 and Asn376. Acetyl-CoA contacts are provided by residues Ala379, 385–386 (NY), Ser404, Ala422, and Arg439.

This sequence in the N-terminal section; belongs to the N-acetylglucosamine-1-phosphate uridyltransferase family. The protein in the C-terminal section; belongs to the transferase hexapeptide repeat family. In terms of assembly, homotrimer. Mg(2+) is required as a cofactor.

The protein resides in the cytoplasm. The enzyme catalyses alpha-D-glucosamine 1-phosphate + acetyl-CoA = N-acetyl-alpha-D-glucosamine 1-phosphate + CoA + H(+). It carries out the reaction N-acetyl-alpha-D-glucosamine 1-phosphate + UTP + H(+) = UDP-N-acetyl-alpha-D-glucosamine + diphosphate. It participates in nucleotide-sugar biosynthesis; UDP-N-acetyl-alpha-D-glucosamine biosynthesis; N-acetyl-alpha-D-glucosamine 1-phosphate from alpha-D-glucosamine 6-phosphate (route II): step 2/2. It functions in the pathway nucleotide-sugar biosynthesis; UDP-N-acetyl-alpha-D-glucosamine biosynthesis; UDP-N-acetyl-alpha-D-glucosamine from N-acetyl-alpha-D-glucosamine 1-phosphate: step 1/1. The protein operates within bacterial outer membrane biogenesis; LPS lipid A biosynthesis. Its function is as follows. Catalyzes the last two sequential reactions in the de novo biosynthetic pathway for UDP-N-acetylglucosamine (UDP-GlcNAc). The C-terminal domain catalyzes the transfer of acetyl group from acetyl coenzyme A to glucosamine-1-phosphate (GlcN-1-P) to produce N-acetylglucosamine-1-phosphate (GlcNAc-1-P), which is converted into UDP-GlcNAc by the transfer of uridine 5-monophosphate (from uridine 5-triphosphate), a reaction catalyzed by the N-terminal domain. The chain is Bifunctional protein GlmU from Thiobacillus denitrificans (strain ATCC 25259 / T1).